A 556-amino-acid polypeptide reads, in one-letter code: MKSDIEIAQSVPLKPITEIVKKVGIDGDDLELYGNYKAKLSFEKIKSVKGNKPGKLILVTAINPTPAGEGKSTMSIGLADALTKIGKKTMLALREPSLGPVMGIKGGAAGGGYAQVLPMEDINLHFTGDMHAITTAHNALSALIDNHLQQGNELGIDPRRIIWKRVLDLNDRSLRQVIVGLGSPVNGVPREDGFDITVASEVMAILCLATDLKDLKARLANIVIAYRYDKSPVYVRDLKVEGALALILKDAIKPNLVQTIYGTPAFVHGGPFANIAHGCNSVLATSTALRLADYTVTEAGFGADLGAEKFLNIKTPNLPKAPDAVVIVATLRALKMHGGVAKADLTFENTAAVRSGFANLKRHVENIRKFNIPVVVAINEFVTDTKAEIQVLKELCAEIAVPVELASVWAKGADGGIALANAVVSAIAEESAAYKRLYADKDSLEEKLRAIVTEIYGGRTVQFGPKAKNQLKQFAQYGWDQLPVCMAKTQYSFSDDPSLLGAPDQFDITIRELVPKTGAGFIVALTGDVMTMPGLPKIPAAMKMDVTEDGTAVGLF.

Residue 65 to 72 (TPAGEGKS) participates in ATP binding.

The protein belongs to the formate--tetrahydrofolate ligase family.

It catalyses the reaction (6S)-5,6,7,8-tetrahydrofolate + formate + ATP = (6R)-10-formyltetrahydrofolate + ADP + phosphate. It functions in the pathway one-carbon metabolism; tetrahydrofolate interconversion. The chain is Formate--tetrahydrofolate ligase from Streptococcus equi subsp. zooepidemicus (strain MGCS10565).